A 166-amino-acid chain; its full sequence is Small ribosomal subunit protein uS9 (166 aa).

A disordered region spans residues 135 to 166; sequence KKAGFLTRDPRATERKKYGLKKARKAPQYSKR. Basic and acidic residues predominate over residues 142–151; the sequence is RDPRATERKK. The segment covering 152 to 166 has biased composition (basic residues); the sequence is YGLKKARKAPQYSKR.

The protein belongs to the universal ribosomal protein uS9 family.

The chain is Small ribosomal subunit protein uS9 from Mycobacterium avium (strain 104).